Here is a 290-residue protein sequence, read N- to C-terminus: 2-phosphoglycerate kinase (290 aa).

The region spanning 1–89 (MIIVTDSERK…FWRELRRRKV (89 aa)) is the ATP-cone domain.

This sequence belongs to the 2-phosphoglycerate kinase family. Requires a divalent metal cation as cofactor.

The enzyme catalyses (2R)-2-phosphoglycerate + ATP = (2R)-2,3-bisphosphoglycerate + ADP + H(+). It functions in the pathway thermoadapter biosynthesis; cyclic 2,3-diphosphoglycerate biosynthesis; cyclic 2,3-diphosphoglycerate from 2-phospho-D-glycerate: step 1/2. In terms of biological role, catalyzes the phosphorylation of 2-phosphoglycerate to 2,3-diphosphoglycerate. Involved in the biosynthesis of cyclic 2,3-bisphosphoglycerate, a thermoprotectant. The polypeptide is 2-phosphoglycerate kinase (Thermococcus kodakarensis (strain ATCC BAA-918 / JCM 12380 / KOD1) (Pyrococcus kodakaraensis (strain KOD1))).